Reading from the N-terminus, the 247-residue chain is Carboxy-S-adenosyl-L-methionine synthase (247 aa).

S-adenosyl-L-methionine is bound by residues Y40, 65–67 (GAS), 90–91 (DN), 122–123 (DI), N137, and R204.

This sequence belongs to the class I-like SAM-binding methyltransferase superfamily. Cx-SAM synthase family. Homodimer.

The catalysed reaction is prephenate + S-adenosyl-L-methionine = carboxy-S-adenosyl-L-methionine + 3-phenylpyruvate + H2O. Catalyzes the conversion of S-adenosyl-L-methionine (SAM) to carboxy-S-adenosyl-L-methionine (Cx-SAM). The chain is Carboxy-S-adenosyl-L-methionine synthase from Pseudomonas putida (strain W619).